The following is a 123-amino-acid chain: Transmembrane protein 254 (123 aa).

An N-acetylalanine modification is found at Ala2. The next 3 membrane-spanning stretches (helical) occupy residues 15-35 (LFWFTVITLSFGYYTWVVFWP), 61-81 (LCNGYWLAWLIHVGESLYAIV), and 95-115 (LLWFLQTFFFGIASLTILIAY).

Its subcellular location is the membrane. This Homo sapiens (Human) protein is Transmembrane protein 254 (TMEM254).